Reading from the N-terminus, the 729-residue chain is Elongation factor 2 (729 aa).

One can recognise a tr-type G domain in the interval Glu19–Ile262. Residues Ala28–Thr35, Asp94–His98, and Asn148–Asp151 each bind GTP. His597 bears the Diphthamide mark.

It belongs to the TRAFAC class translation factor GTPase superfamily. Classic translation factor GTPase family. EF-G/EF-2 subfamily.

The protein resides in the cytoplasm. Functionally, catalyzes the GTP-dependent ribosomal translocation step during translation elongation. During this step, the ribosome changes from the pre-translocational (PRE) to the post-translocational (POST) state as the newly formed A-site-bound peptidyl-tRNA and P-site-bound deacylated tRNA move to the P and E sites, respectively. Catalyzes the coordinated movement of the two tRNA molecules, the mRNA and conformational changes in the ribosome. In Halomicrobium mukohataei (strain ATCC 700874 / DSM 12286 / JCM 9738 / NCIMB 13541) (Haloarcula mukohataei), this protein is Elongation factor 2.